A 66-amino-acid chain; its full sequence is Cytochrome b-c1 complex subunit 9, mitochondrial (66 aa).

Topologically, residues 2-17 (SFSSLYKTFFKRNAVF) are mitochondrial matrix. Residues 18-43 (VGTIFAGAFVFQTVFDTAITSWYENH) form a helical membrane-spanning segment. Residues 44–66 (NKGKLWKDVKARIAAGDGDDDDE) lie on the Mitochondrial intermembrane side of the membrane.

This sequence belongs to the UQCR10/QCR9 family. As to quaternary structure, component of the ubiquinol-cytochrome c oxidoreductase (cytochrome b-c1 complex, complex III, CIII), a multisubunit enzyme composed of 10 subunits. The complex is composed of 3 respiratory subunits cytochrome b (COB), cytochrome c1 (CYT1) and Rieske protein (RIP1), 2 core protein subunits COR1 and QCR2, and 5 low-molecular weight protein subunits QCR6, QCR7, QCR8, QCR9 and QCR10. The complex exists as an obligatory dimer and forms supercomplexes (SCs) in the inner mitochondrial membrane with a monomer or a dimer of cytochrome c oxidase (complex IV, CIV), resulting in 2 different assemblies (supercomplexes III(2)IV and III(2)IV(2)). Interacts with the transmembrane segment of RIP1.

The protein localises to the mitochondrion inner membrane. Component of the ubiquinol-cytochrome c oxidoreductase, a multisubunit transmembrane complex that is part of the mitochondrial electron transport chain which drives oxidative phosphorylation. The respiratory chain contains 3 multisubunit complexes succinate dehydrogenase (complex II, CII), ubiquinol-cytochrome c oxidoreductase (cytochrome b-c1 complex, complex III, CIII) and cytochrome c oxidase (complex IV, CIV), that cooperate to transfer electrons derived from NADH and succinate to molecular oxygen, creating an electrochemical gradient over the inner membrane that drives transmembrane transport and the ATP synthase. The cytochrome b-c1 complex catalyzes electron transfer from ubiquinol to cytochrome c, linking this redox reaction to translocation of protons across the mitochondrial inner membrane, with protons being carried across the membrane as hydrogens on the quinol. In the process called Q cycle, 2 protons are consumed from the matrix, 4 protons are released into the intermembrane space and 2 electrons are passed to cytochrome c. This is Cytochrome b-c1 complex subunit 9, mitochondrial (QCR9) from Saccharomyces cerevisiae (strain ATCC 204508 / S288c) (Baker's yeast).